A 106-amino-acid chain; its full sequence is Urease subunit beta (106 aa).

This sequence belongs to the urease beta subunit family. In terms of assembly, heterotrimer of UreA (gamma), UreB (beta) and UreC (alpha) subunits. Three heterotrimers associate to form the active enzyme.

It is found in the cytoplasm. It catalyses the reaction urea + 2 H2O + H(+) = hydrogencarbonate + 2 NH4(+). Its pathway is nitrogen metabolism; urea degradation; CO(2) and NH(3) from urea (urease route): step 1/1. The protein is Urease subunit beta of Klebsiella pneumoniae (strain 342).